The chain runs to 260 residues: Hemin import ATP-binding protein HmuV (260 aa).

An ABC transporter domain is found at 6 to 242 (LHADNLHYRA…VQLRACYQAD (237 aa)). 38 to 45 (GPNGAGKS) lines the ATP pocket.

Belongs to the ABC transporter superfamily. Heme (hemin) importer (TC 3.A.1.14.5) family. The complex is composed of two ATP-binding proteins (HmuV), two transmembrane proteins (HmuU) and a solute-binding protein (HmuT).

The protein resides in the cell inner membrane. In terms of biological role, part of the ABC transporter complex HmuTUV involved in hemin import. Responsible for energy coupling to the transport system. The polypeptide is Hemin import ATP-binding protein HmuV (Sodalis glossinidius (strain morsitans)).